Consider the following 396-residue polypeptide: NADH-quinone oxidoreductase subunit D (396 aa).

This sequence belongs to the complex I 49 kDa subunit family. As to quaternary structure, NDH-1 is composed of 14 different subunits. Subunits NuoB, C, D, E, F, and G constitute the peripheral sector of the complex.

The protein localises to the cell inner membrane. It catalyses the reaction a quinone + NADH + 5 H(+)(in) = a quinol + NAD(+) + 4 H(+)(out). Functionally, NDH-1 shuttles electrons from NADH, via FMN and iron-sulfur (Fe-S) centers, to quinones in the respiratory chain. The immediate electron acceptor for the enzyme in this species is believed to be ubiquinone. Couples the redox reaction to proton translocation (for every two electrons transferred, four hydrogen ions are translocated across the cytoplasmic membrane), and thus conserves the redox energy in a proton gradient. The protein is NADH-quinone oxidoreductase subunit D of Methylorubrum extorquens (strain PA1) (Methylobacterium extorquens).